Consider the following 71-residue polypeptide: Vitellogenin-B2 (71 aa).

The first 15 residues, 1–15 (MRGIILALLLALAGC), serve as a signal peptide directing secretion. In terms of domain architecture, Vitellogenin spans 24 to 71 (FSESKTYVYNYEGIILNGIPENGLARSGIKLNCKVELSGYAQRSYMLK).

As to expression, produced by the liver, secreted into the blood and then sequestered by receptor mediated endocytosis into growing oocytes, where it is generally cleaved, giving rise to the respective yolk components.

In terms of biological role, precursor of the major egg-yolk proteins that are sources of nutrients during early development of oviparous organisms. The sequence is that of Vitellogenin-B2 from Xenopus laevis (African clawed frog).